A 276-amino-acid polypeptide reads, in one-letter code: N-acetylmuramoyl-L-alanine amidase AmiD (276 aa).

Residues Met-1–Gly-16 form the signal peptide. Residue Cys-17 is the site of N-palmitoyl cysteine attachment. Cys-17 is lipidated: S-diacylglycerol cysteine. Residues Pro-42 to Pro-179 enclose the N-acetylmuramoyl-L-alanine amidase domain. His-50 contributes to the Zn(2+) binding site. Tyr-51–Thr-52 serves as a coordination point for substrate. Glu-119 serves as the catalytic Proton acceptor. Zn(2+) is bound by residues His-166 and Asp-176.

It belongs to the N-acetylmuramoyl-L-alanine amidase 2 family. Requires Zn(2+) as cofactor.

The protein resides in the cell outer membrane. The enzyme catalyses Hydrolyzes the link between N-acetylmuramoyl residues and L-amino acid residues in certain cell-wall glycopeptides.. This is N-acetylmuramoyl-L-alanine amidase AmiD (amiD) from Escherichia coli (strain K12).